A 325-amino-acid chain; its full sequence is UPF0164 protein TP_0856 (325 aa).

A signal peptide spans 1 to 28; that stretch reads MVHYKSVFYKSAALVCGFVLAGASVAIA.

Belongs to the UPF0164 family.

The chain is UPF0164 protein TP_0856 from Treponema pallidum (strain Nichols).